The chain runs to 350 residues: MFIDSVKITLASGDGGKGAVSFRREKHVPLGGPDGGDGGNGGDIIFVCDNNTHTLVNFKGKRELRAQNGAGGMGRNKNGKKGENLELIVPEGTQVIDVQTNEILLDLTKEGQRELFLKGGKGGLGNTHFKHATNQRPDYAQPGIKGESRLVRLELKLIADVGLVGFPNVGKSTLISVVSNAKPEIANYEFTTLTPKLGLVDVDEYNSFVMADIPGIIEGASGGKGLGLAFLKHIERTSFLLFVLDPMRQMPLKEQFIVLRKELEKFSNELFGRKFGIMISKSDSVRLGEEFAEQIALNINELDNYLKEINNPQSFLIKVSSLEKTGLKELKFMLLEEIKTLRNNKKILTI.

The Obg domain occupies 1 to 158 (MFIDSVKITL…RLVRLELKLI (158 aa)). The region spanning 159–339 (ADVGLVGFPN…LKFMLLEEIK (181 aa)) is the OBG-type G domain. GTP-binding positions include 165-172 (GFPNVGKS), 190-194 (FTTLT), 212-215 (DIPG), 280-283 (SKSD), and 320-322 (SSL). Residues Ser172 and Thr192 each coordinate Mg(2+).

It belongs to the TRAFAC class OBG-HflX-like GTPase superfamily. OBG GTPase family. As to quaternary structure, monomer. The cofactor is Mg(2+).

Its subcellular location is the cytoplasm. Functionally, an essential GTPase which binds GTP, GDP and possibly (p)ppGpp with moderate affinity, with high nucleotide exchange rates and a fairly low GTP hydrolysis rate. Plays a role in control of the cell cycle, stress response, ribosome biogenesis and in those bacteria that undergo differentiation, in morphogenesis control. This is GTPase Obg from Campylobacter jejuni (strain RM1221).